A 332-amino-acid chain; its full sequence is Glycerol-3-phosphate dehydrogenase [NAD(P)+] (332 aa).

Residues Ser-11, Phe-12, Lys-32, and Lys-106 each coordinate NADPH. The sn-glycerol 3-phosphate site is built by Lys-106, Gly-137, and Ser-139. Ala-141 serves as a coordination point for NADPH. Sn-glycerol 3-phosphate is bound by residues Lys-192, Asp-245, Ser-255, Arg-256, and Asn-257. The active-site Proton acceptor is the Lys-192. Arg-256 provides a ligand contact to NADPH. 2 residues coordinate NADPH: Val-280 and Glu-282.

This sequence belongs to the NAD-dependent glycerol-3-phosphate dehydrogenase family.

The protein localises to the cytoplasm. It catalyses the reaction sn-glycerol 3-phosphate + NAD(+) = dihydroxyacetone phosphate + NADH + H(+). It carries out the reaction sn-glycerol 3-phosphate + NADP(+) = dihydroxyacetone phosphate + NADPH + H(+). It functions in the pathway membrane lipid metabolism; glycerophospholipid metabolism. Catalyzes the reduction of the glycolytic intermediate dihydroxyacetone phosphate (DHAP) to sn-glycerol 3-phosphate (G3P), the key precursor for phospholipid synthesis. The protein is Glycerol-3-phosphate dehydrogenase [NAD(P)+] of Staphylococcus saprophyticus subsp. saprophyticus (strain ATCC 15305 / DSM 20229 / NCIMB 8711 / NCTC 7292 / S-41).